The sequence spans 599 residues: NADH-quinone oxidoreductase subunit C/D (599 aa).

Residues 1 to 190 (MMIDQIAQES…DPFELTRQKE (190 aa)) form an NADH dehydrogenase I subunit C region. The tract at residues 214–599 (DFMFLNLGPN…IDFVMSDVDR (386 aa)) is NADH dehydrogenase I subunit D.

In the N-terminal section; belongs to the complex I 30 kDa subunit family. The protein in the C-terminal section; belongs to the complex I 49 kDa subunit family. As to quaternary structure, NDH-1 is composed of 13 different subunits. Subunits NuoB, CD, E, F, and G constitute the peripheral sector of the complex.

The protein localises to the cell inner membrane. It catalyses the reaction a quinone + NADH + 5 H(+)(in) = a quinol + NAD(+) + 4 H(+)(out). NDH-1 shuttles electrons from NADH, via FMN and iron-sulfur (Fe-S) centers, to quinones in the respiratory chain. The immediate electron acceptor for the enzyme in this species is believed to be ubiquinone. Couples the redox reaction to proton translocation (for every two electrons transferred, four hydrogen ions are translocated across the cytoplasmic membrane), and thus conserves the redox energy in a proton gradient. This chain is NADH-quinone oxidoreductase subunit C/D, found in Photorhabdus laumondii subsp. laumondii (strain DSM 15139 / CIP 105565 / TT01) (Photorhabdus luminescens subsp. laumondii).